A 63-amino-acid chain; its full sequence is Phylloseptin-Az1 (63 aa).

A signal peptide spans 1–19 (LKKSLFLVVFLGLATLSIC). Positions 20 to 41 (EEEKRETEEEEYNQGEDDKSEE) are excised as a propeptide. A Phenylalanine amide modification is found at F62.

In terms of tissue distribution, expressed by the skin glands.

The protein resides in the secreted. Has antimicrobial activity. This chain is Phylloseptin-Az1, found in Pithecopus azureus (Orange-legged monkey tree frog).